We begin with the raw amino-acid sequence, 97 residues long: Glutamyl-tRNA(Gln) amidotransferase subunit C (97 aa).

This sequence belongs to the GatC family. In terms of assembly, heterotrimer of A, B and C subunits.

It carries out the reaction L-glutamyl-tRNA(Gln) + L-glutamine + ATP + H2O = L-glutaminyl-tRNA(Gln) + L-glutamate + ADP + phosphate + H(+). It catalyses the reaction L-aspartyl-tRNA(Asn) + L-glutamine + ATP + H2O = L-asparaginyl-tRNA(Asn) + L-glutamate + ADP + phosphate + 2 H(+). Its function is as follows. Allows the formation of correctly charged Asn-tRNA(Asn) or Gln-tRNA(Gln) through the transamidation of misacylated Asp-tRNA(Asn) or Glu-tRNA(Gln) in organisms which lack either or both of asparaginyl-tRNA or glutaminyl-tRNA synthetases. The reaction takes place in the presence of glutamine and ATP through an activated phospho-Asp-tRNA(Asn) or phospho-Glu-tRNA(Gln). The polypeptide is Glutamyl-tRNA(Gln) amidotransferase subunit C (Saccharolobus solfataricus (strain ATCC 35092 / DSM 1617 / JCM 11322 / P2) (Sulfolobus solfataricus)).